The sequence spans 357 residues: Putative F-box/kelch-repeat protein At5g38680 (357 aa).

In terms of domain architecture, F-box spans 14-61; sequence NSNPSLPDALIISCIARVSRLYYPILSFVSKSFRSLLASPELYKERSL. Kelch repeat units lie at residues 131–175, 177–224, 226–267, and 268–313; these read NIYN…VLDG, IYVA…SKSL, IDEK…YCEI, and ENVL…GGKK.

The polypeptide is Putative F-box/kelch-repeat protein At5g38680 (Arabidopsis thaliana (Mouse-ear cress)).